A 115-amino-acid polypeptide reads, in one-letter code: Nitrogen regulatory protein P-II 2 (115 aa).

Y54 carries the O-UMP-tyrosine modification.

Belongs to the P(II) protein family.

Functionally, could be involved in the regulation of nitrogen fixation. In Methanothermobacter thermautotrophicus (strain ATCC 29096 / DSM 1053 / JCM 10044 / NBRC 100330 / Delta H) (Methanobacterium thermoautotrophicum), this protein is Nitrogen regulatory protein P-II 2.